Consider the following 394-residue polypeptide: Cell division protein FtsZ (394 aa).

GTP-binding positions include 21-25, 108-110, glutamate 139, arginine 143, and aspartate 187; these read GGGNN and GTG. The disordered stretch occupies residues 317–394; the sequence is DKPSSQGRKA…EERRSRRTRR (78 aa). Low complexity-rich tracts occupy residues 328–346 and 353–364; these read STGFGSSVNSSSNHQSGAS and SAHTSHSQSSES. Positions 365 to 388 are enriched in basic and acidic residues; sequence VNERSHTTKDDDIPSFIRNREERR.

The protein belongs to the FtsZ family. In terms of assembly, homodimer. Polymerizes to form a dynamic ring structure in a strictly GTP-dependent manner. Interacts directly with several other division proteins.

The protein localises to the cytoplasm. Its function is as follows. Essential cell division protein that forms a contractile ring structure (Z ring) at the future cell division site. The regulation of the ring assembly controls the timing and the location of cell division. One of the functions of the FtsZ ring is to recruit other cell division proteins to the septum to produce a new cell wall between the dividing cells. Binds GTP and shows GTPase activity. In Staphylococcus epidermidis (strain ATCC 12228 / FDA PCI 1200), this protein is Cell division protein FtsZ.